Here is a 467-residue protein sequence, read N- to C-terminus: MQPFIDDRFLLQNKHAEVLYHDYAKSLPIIDYHCHLSAKEIAEDRRFHDMTELWLEGDHYKWRAMRALGVEEKYITGSASPEEKFQAWAKTVPYCIGNPLYHWTHLELKRYFQVGVLLNEQTWKEVWDHCNELLQQEGYSARSFMIQSNVEWIGTTDDPLDDLMDHQKIAQDSSFSIKVVPSFRPDAVIEINRPSFLDYVSKLGEVADLSVDDYGQLLQALENRVRYFHEAGCRMADHGLESMPYAECTLDEARVIFQKRKEGFALSREEEEKYQTFTLCFLARLYYSLGWVMQLHIGSIRNTNQKMFQQLGPNTGYDSINDFFFAQPLNAFLNRLERDGQLPKTIVYTLNPAYNYIVASTIGNFPSEGVKGKVQFGAAWWFNDHQDGIIRHLNDLANVGVFSTFVGMLTDSRSFLSYVRHEYFRRIVCNLIGSWIEKGEAPQDYAFLGKIVQDICYFNAKQYFDLS.

This sequence belongs to the metallo-dependent hydrolases superfamily. Uronate isomerase family.

It carries out the reaction D-glucuronate = D-fructuronate. The enzyme catalyses aldehydo-D-galacturonate = keto-D-tagaturonate. Its pathway is carbohydrate metabolism; pentose and glucuronate interconversion. The sequence is that of Uronate isomerase from Geobacillus thermodenitrificans (strain NG80-2).